The chain runs to 267 residues: NAD kinase 2 (267 aa).

Residue D50 is the Proton acceptor of the active site. Residues 50–51, K55, 122–123, R149, D151, 162–167, and A186 each bind NAD(+); these read DG, NE, and TAYNKS.

This sequence belongs to the NAD kinase family. It depends on a divalent metal cation as a cofactor.

The protein localises to the cytoplasm. It catalyses the reaction NAD(+) + ATP = ADP + NADP(+) + H(+). Involved in the regulation of the intracellular balance of NAD and NADP, and is a key enzyme in the biosynthesis of NADP. Catalyzes specifically the phosphorylation on 2'-hydroxyl of the adenosine moiety of NAD to yield NADP. The polypeptide is NAD kinase 2 (Listeria monocytogenes serovar 1/2a (strain ATCC BAA-679 / EGD-e)).